Here is a 122-residue protein sequence, read N- to C-terminus: Large ribosomal subunit protein uL14 (122 aa).

It belongs to the universal ribosomal protein uL14 family. As to quaternary structure, part of the 50S ribosomal subunit. Forms a cluster with proteins L3 and L19. In the 70S ribosome, L14 and L19 interact and together make contacts with the 16S rRNA in bridges B5 and B8.

Its function is as follows. Binds to 23S rRNA. Forms part of two intersubunit bridges in the 70S ribosome. The chain is Large ribosomal subunit protein uL14 from Brucella anthropi (strain ATCC 49188 / DSM 6882 / CCUG 24695 / JCM 21032 / LMG 3331 / NBRC 15819 / NCTC 12168 / Alc 37) (Ochrobactrum anthropi).